Here is a 207-residue protein sequence, read N- to C-terminus: MTRPMLEALDLAGVRGERRLFDHLTFRIVPGECLSVHGENGSGKTTLLRTLAGFATPAAGRVLWKGKPLRNQWSEYQRELVYNGHGIGLKEDLNALDNLLAAAAIAGEPVTTECVESALDEVGLAEHRHLPFRMLSQGQKRRASLARLLLYRRKLWILDEPSTALDQFGARWLGELIHRHQSRGGMVVLTSHQELALKTSQTVRMGA.

In terms of domain architecture, ABC transporter spans 6 to 207; that stretch reads LEALDLAGVR…KTSQTVRMGA (202 aa). 38–45 contributes to the ATP binding site; sequence GENGSGKT.

This sequence belongs to the ABC transporter superfamily. CcmA exporter (TC 3.A.1.107) family. The complex is composed of two ATP-binding proteins (CcmA) and two transmembrane proteins (CcmB).

The protein resides in the cell inner membrane. The catalysed reaction is heme b(in) + ATP + H2O = heme b(out) + ADP + phosphate + H(+). Its function is as follows. Part of the ABC transporter complex CcmAB involved in the biogenesis of c-type cytochromes; once thought to export heme, this seems not to be the case, but its exact role is uncertain. Responsible for energy coupling to the transport system. This is Cytochrome c biogenesis ATP-binding export protein CcmA 1 from Cupriavidus metallidurans (strain ATCC 43123 / DSM 2839 / NBRC 102507 / CH34) (Ralstonia metallidurans).